The primary structure comprises 255 residues: tRNA pseudouridine synthase A (255 aa).

Residue Asp-43 is the Nucleophile of the active site. Position 94 (Tyr-94) interacts with substrate.

It belongs to the tRNA pseudouridine synthase TruA family.

The enzyme catalyses uridine(38/39/40) in tRNA = pseudouridine(38/39/40) in tRNA. Formation of pseudouridine at positions 38, 39 and 40 in the anticodon stem and loop of transfer RNAs. This is tRNA pseudouridine synthase A from Pyrobaculum neutrophilum (strain DSM 2338 / JCM 9278 / NBRC 100436 / V24Sta) (Thermoproteus neutrophilus).